A 259-amino-acid polypeptide reads, in one-letter code: Triosephosphate isomerase (259 aa).

A substrate-binding site is contributed by 10 to 12; the sequence is NWK. Histidine 102 (electrophile) is an active-site residue. Glutamate 174 (proton acceptor) is an active-site residue. Substrate-binding positions include glycine 180, serine 220, and 241–242; that span reads GG.

Belongs to the triosephosphate isomerase family. Homodimer.

The protein localises to the cytoplasm. The catalysed reaction is D-glyceraldehyde 3-phosphate = dihydroxyacetone phosphate. It participates in carbohydrate biosynthesis; gluconeogenesis. It functions in the pathway carbohydrate degradation; glycolysis; D-glyceraldehyde 3-phosphate from glycerone phosphate: step 1/1. Involved in the gluconeogenesis. Catalyzes stereospecifically the conversion of dihydroxyacetone phosphate (DHAP) to D-glyceraldehyde-3-phosphate (G3P). The chain is Triosephosphate isomerase from Cutibacterium acnes (strain DSM 16379 / KPA171202) (Propionibacterium acnes).